A 63-amino-acid chain; its full sequence is Laccase-C1 (63 aa).

Belongs to the multicopper oxidase family. As to quaternary structure, monomer. The cofactor is Cu cation. Post-translationally, glycosylated; contains 16% carbohydrates.

The protein resides in the secreted. It carries out the reaction 4 hydroquinone + O2 = 4 benzosemiquinone + 2 H2O. Inhibited by sodium azide. Lignin degradation and detoxification of lignin-derived products. Oxidation of a broad range of substrates including mono-, di- and polyphenols, aromatic amines and methoxy-substituted phenols accompanied by reduction of oxygen to water. In Cerrena unicolor (Canker rot fungus), this protein is Laccase-C1.